Consider the following 440-residue polypeptide: Asparagine--tRNA ligase (440 aa).

It belongs to the class-II aminoacyl-tRNA synthetase family. In terms of assembly, homodimer.

Its subcellular location is the cytoplasm. It catalyses the reaction tRNA(Asn) + L-asparagine + ATP = L-asparaginyl-tRNA(Asn) + AMP + diphosphate + H(+). This chain is Asparagine--tRNA ligase, found in Roseiflexus sp. (strain RS-1).